A 346-amino-acid polypeptide reads, in one-letter code: S-adenosylmethionine:tRNA ribosyltransferase-isomerase (346 aa).

The protein belongs to the QueA family. As to quaternary structure, monomer.

Its subcellular location is the cytoplasm. The catalysed reaction is 7-aminomethyl-7-carbaguanosine(34) in tRNA + S-adenosyl-L-methionine = epoxyqueuosine(34) in tRNA + adenine + L-methionine + 2 H(+). It functions in the pathway tRNA modification; tRNA-queuosine biosynthesis. Functionally, transfers and isomerizes the ribose moiety from AdoMet to the 7-aminomethyl group of 7-deazaguanine (preQ1-tRNA) to give epoxyqueuosine (oQ-tRNA). This chain is S-adenosylmethionine:tRNA ribosyltransferase-isomerase, found in Lactococcus lactis subsp. cremoris (strain MG1363).